Reading from the N-terminus, the 256-residue chain is Matrix protein (256 aa).

An interaction with M2-1 region spans residues methionine 1–cysteine 110. The nuclear targeting and binding to host importin KPNB1 stretch occupies residues cysteine 110–threonine 183. The Nuclear export signal motif lies at isoleucine 194–valine 206. Threonine 205 is subject to Phosphothreonine.

The protein belongs to the pneumovirinae M protein family. In terms of assembly, forms dimers. Forms higher-order oligomers. Interacts with glycoprotein G (via N-terminus). Interacts with protein M2-1; this interaction directs the matrix protein localization to cytoplasmic inclusions comprising viral proteins L, N, P, and M2-1 and mediates the matrix protein association with the nucleocapsid. Interacts with host KPNB1; this interaction mediates nuclear import of the matrix protein early during infection. In terms of processing, phosphorylation is important for oligomerization.

It localises to the virion. The protein localises to the host cytoplasm. The protein resides in the host nucleus. It is found in the host cell membrane. In terms of biological role, plays a crucial role in virus assembly into filaments and budding. Early in infection, localizes in the nucleus where it may inhibit host cell transcription. Later in infection, traffics to the cytoplasm through the action of host CRM1 to associate with inclusion bodies, the site of viral transcription and replication. During virus assembly and budding, acts as a bridge between the nucleocapsid and the lipid bilayer. The sequence is that of Matrix protein (M) from Bos taurus (Bovine).